The sequence spans 334 residues: 6-phosphogluconolactonase (334 aa).

This sequence belongs to the cycloisomerase 2 family.

The catalysed reaction is 6-phospho-D-glucono-1,5-lactone + H2O = 6-phospho-D-gluconate + H(+). Its pathway is carbohydrate degradation; pentose phosphate pathway; D-ribulose 5-phosphate from D-glucose 6-phosphate (oxidative stage): step 2/3. Catalyzes the hydrolysis of 6-phosphogluconolactone to 6-phosphogluconate. The sequence is that of 6-phosphogluconolactonase from Buchnera aphidicola subsp. Acyrthosiphon pisum (strain Tuc7).